The chain runs to 434 residues: 3-phosphoshikimate 1-carboxyvinyltransferase (434 aa).

3-phosphoshikimate is bound by residues Lys22, Ser23, and Arg27. Lys22 contributes to the phosphoenolpyruvate binding site. Gly93 and Arg121 together coordinate phosphoenolpyruvate. The 3-phosphoshikimate site is built by Ser168, Ser169, Gln170, Ser199, Asp320, and Lys347. Gln170 lines the phosphoenolpyruvate pocket. Asp320 serves as the catalytic Proton acceptor. The phosphoenolpyruvate site is built by Arg351, Arg395, and Lys420.

It belongs to the EPSP synthase family. In terms of assembly, monomer.

The protein localises to the cytoplasm. The catalysed reaction is 3-phosphoshikimate + phosphoenolpyruvate = 5-O-(1-carboxyvinyl)-3-phosphoshikimate + phosphate. It functions in the pathway metabolic intermediate biosynthesis; chorismate biosynthesis; chorismate from D-erythrose 4-phosphate and phosphoenolpyruvate: step 6/7. In terms of biological role, catalyzes the transfer of the enolpyruvyl moiety of phosphoenolpyruvate (PEP) to the 5-hydroxyl of shikimate-3-phosphate (S3P) to produce enolpyruvyl shikimate-3-phosphate and inorganic phosphate. This chain is 3-phosphoshikimate 1-carboxyvinyltransferase, found in Cupriavidus taiwanensis (strain DSM 17343 / BCRC 17206 / CCUG 44338 / CIP 107171 / LMG 19424 / R1) (Ralstonia taiwanensis (strain LMG 19424)).